Reading from the N-terminus, the 339-residue chain is Tetraacyldisaccharide 4'-kinase (339 aa).

Thr53–Thr60 provides a ligand contact to ATP.

This sequence belongs to the LpxK family.

The enzyme catalyses a lipid A disaccharide + ATP = a lipid IVA + ADP + H(+). It functions in the pathway glycolipid biosynthesis; lipid IV(A) biosynthesis; lipid IV(A) from (3R)-3-hydroxytetradecanoyl-[acyl-carrier-protein] and UDP-N-acetyl-alpha-D-glucosamine: step 6/6. Functionally, transfers the gamma-phosphate of ATP to the 4'-position of a tetraacyldisaccharide 1-phosphate intermediate (termed DS-1-P) to form tetraacyldisaccharide 1,4'-bis-phosphate (lipid IVA). The chain is Tetraacyldisaccharide 4'-kinase from Bartonella henselae (strain ATCC 49882 / DSM 28221 / CCUG 30454 / Houston 1) (Rochalimaea henselae).